We begin with the raw amino-acid sequence, 308 residues long: MNDTIPATGHLLGAADIRRIAADAGISPTKKFGQNFVIDPGTVRRIVREAGVTAADHVMEVGPGLGSLTLAILETGATMTAVEIDPPLAERLPGTVAEFMPEATSRLTVVNRDALTVTPENVPDFSDDASFTLVANLPYNVATPILLTLLERFDNLGSFLVMVQKEVADRLAAKPGSKIYGTPSVKLAWYGTAERVGTIGRNVFWPAPNVDSALVRFTRYQADDPAAPGASNSTADGGTQRELVFRLIDAAFGQRRKTLHAALKTIAPSEAFSIAGIDPTRRGETLTIAEFTALAKAIESCGDGDEAQ.

S-adenosyl-L-methionine contacts are provided by N35, V37, G62, E83, D113, and N136.

This sequence belongs to the class I-like SAM-binding methyltransferase superfamily. rRNA adenine N(6)-methyltransferase family. RsmA subfamily.

The protein resides in the cytoplasm. It carries out the reaction adenosine(1518)/adenosine(1519) in 16S rRNA + 4 S-adenosyl-L-methionine = N(6)-dimethyladenosine(1518)/N(6)-dimethyladenosine(1519) in 16S rRNA + 4 S-adenosyl-L-homocysteine + 4 H(+). In terms of biological role, specifically dimethylates two adjacent adenosines (A1518 and A1519) in the loop of a conserved hairpin near the 3'-end of 16S rRNA in the 30S particle. May play a critical role in biogenesis of 30S subunits. In Bifidobacterium longum (strain NCC 2705), this protein is Ribosomal RNA small subunit methyltransferase A.